A 471-amino-acid polypeptide reads, in one-letter code: U1 small nuclear ribonucleoprotein 70 kDa (471 aa).

Residues 48–78 form a disordered region; the sequence is FEDPRDAPPPTRAETREERMERKRREKIERR. Positions 60 to 78 are enriched in basic and acidic residues; the sequence is AETREERMERKRREKIERR. Residues 92–205 form a required for interaction with U1 RNA region; sequence HNDQNAQGDA…GGGLGGTRRG (114 aa). The RRM domain occupies 103 to 184; that stretch reads KTLFVARVNY…RRVLVDVERG (82 aa). Residues 190–471 are disordered; it reads WRPRRLGGGL…NGYMMEPPME (282 aa). A compositionally biased stretch (gly residues) spans 195-204; sequence LGGGLGGTRR. The span at 210–246 shows a compositional bias: basic and acidic residues; sequence NIRHSGRDDTSRYDERDRERERDRRERSREREKEPRE. Basic residues predominate over residues 247 to 261; it reads RRRSRSRERRRKSRS. Residues 262–288 are compositionally biased toward basic and acidic residues; the sequence is REKEERKRTREKSKDKDKEKDKDNKDR. Over residues 289–298 the composition is skewed to basic residues; it reads DRKRRSRSRE. Basic and acidic residues predominate over residues 299-316; it reads RKRERDRDREKKEERVEA. A compositionally biased stretch (acidic residues) spans 317–326; that stretch reads EVPEADDAPQ. Basic and acidic residues predominate over residues 339–428; it reads IELKQEPEEK…RSEKREERVP (90 aa).

As to quaternary structure, component of the U1 snRNP. The U1 snRNP is composed of the U1 snRNA and the 7 core Sm proteins snrpb, snrpd1, snrpd2, snrpd3, snrpe, snrpf and snrpg that assemble in a heptameric protein ring on the Sm site of the small nuclear RNA to form the core snRNP, and at least three U1 snRNP-specific proteins snrnp70/U1-70K, snrpa/U1-A and snrpc/U1-C.

Its subcellular location is the nucleus speckle. The protein localises to the nucleus. The protein resides in the nucleoplasm. In terms of biological role, component of the spliceosomal U1 snRNP, which is essential for recognition of the pre-mRNA 5' splice-site and the subsequent assembly of the spliceosome. snrnp70 binds to the loop I region of U1-snRNA. The chain is U1 small nuclear ribonucleoprotein 70 kDa (snrnp70) from Xenopus laevis (African clawed frog).